Reading from the N-terminus, the 91-residue chain is UPF0358 protein Sca_0738 (91 aa).

It belongs to the UPF0358 family.

The protein is UPF0358 protein Sca_0738 of Staphylococcus carnosus (strain TM300).